The following is a 572-amino-acid chain: Moesin (572 aa).

An FERM domain is found at 1 to 294 (MPRGVAVRVT…GNHELYMRRR (294 aa)). Disordered regions lie at residues 444-508 (SQER…SYLP) and 523-544 (LQAM…QENI). Residues 454–475 (AQEAAAAQHAAQLAAQREAQQL) are compositionally biased toward low complexity. Residues 480–502 (EGEEDEQDHELEVQQDDNDDLDD) are compositionally biased toward acidic residues. The span at 525–544 (AMKDESKGEDRYDKIHQENI) shows a compositional bias: basic and acidic residues.

The protein localises to the cell membrane. It is found in the cytoplasm. The protein resides in the cytoskeleton. Its subcellular location is the cell projection. In terms of biological role, probably involved in connections of major cytoskeletal structures to the plasma membrane. The chain is Moesin from Lytechinus variegatus (Green sea urchin).